Reading from the N-terminus, the 373-residue chain is MPDLKRAIGLMSGTSMDGIDIALLATDGENWIERRASASMDYSDGFRARLKAGLVDARAIKDRAERPGLLRQLEHDLTLLHAVAVHDFLHEQGLQPHEIDVIGFHGQTVLHRPNESLTVQIGDGALLARETGIPVVYDMRAEDMRHGGQGAPLIPAYHAALAANLPLGLKGPVVFVNIGGISNLTYVGEDGALIAYDSGPGNMLIDQWMELHGHGRFDPGGATAMSGSVDRNTAHRYLEHEFFKGNHRRSLDRGDFAIPAKGELNLADGARTLAFVSAAAILKSASHLPARPRTYVVSGGGRKNGALMDELTALAEREGAHVIDADNAGFDGDAMEAEAWAYLAVRSLCGLPLTYPSTTGCDKPVSGGVPVRP.

13-20 (GTSMDGID) serves as a coordination point for ATP.

Belongs to the anhydro-N-acetylmuramic acid kinase family.

It catalyses the reaction 1,6-anhydro-N-acetyl-beta-muramate + ATP + H2O = N-acetyl-D-muramate 6-phosphate + ADP + H(+). Its pathway is amino-sugar metabolism; 1,6-anhydro-N-acetylmuramate degradation. It functions in the pathway cell wall biogenesis; peptidoglycan recycling. Functionally, catalyzes the specific phosphorylation of 1,6-anhydro-N-acetylmuramic acid (anhMurNAc) with the simultaneous cleavage of the 1,6-anhydro ring, generating MurNAc-6-P. Is required for the utilization of anhMurNAc either imported from the medium or derived from its own cell wall murein, and thus plays a role in cell wall recycling. The chain is Anhydro-N-acetylmuramic acid kinase from Brucella abortus (strain 2308).